The sequence spans 60 residues: Metallothionein A (60 aa).

The segment at 1 to 28 (MDPCECSKSGNCNCGGSCTCTNCSCKSC) is beta. A divalent metal cation contacts are provided by Cys-4, Cys-6, Cys-12, Cys-14, Cys-18, Cys-20, Cys-23, Cys-25, Cys-28, Cys-32, Cys-33, Cys-35, Cys-36, Cys-40, Cys-43, Cys-47, Cys-49, Cys-54, Cys-58, and Cys-59. The segment at 29 to 60 (KKSCCPCCPSGCTKCASGCVCIGKTCDTSCCQ) is alpha.

Belongs to the metallothionein superfamily. Type 1 family.

Metallothioneins have a high content of cysteine residues that bind various heavy metals. The chain is Metallothionein A (mta) from Chaenocephalus aceratus (Blackfin icefish).